We begin with the raw amino-acid sequence, 405 residues long: Tyrosine-protein phosphatase non-receptor type eak-6 (405 aa).

Residues Ile-30–Tyr-309 enclose the Tyrosine-protein phosphatase domain. The Phosphocysteine intermediate role is filled by Cys-248.

It belongs to the protein-tyrosine phosphatase family. Expressed in the 2 embryonic head hypodermal cells XXXL/R.

The protein localises to the cytoplasm. It localises to the cell membrane. It catalyses the reaction O-phospho-L-tyrosyl-[protein] + H2O = L-tyrosyl-[protein] + phosphate. Putative phosphatase which, together with eak-4 and sdf-9, negatively regulates dauer larva formation downstream of insulin-like receptor daf-2 and in parallel of age-1, pdk-1 and akt-1. The sequence is that of Tyrosine-protein phosphatase non-receptor type eak-6 from Caenorhabditis elegans.